Here is a 163-residue protein sequence, read N- to C-terminus: 2-C-methyl-D-erythritol 2,4-cyclodiphosphate synthase (163 aa).

Positions 10 and 12 each coordinate a divalent metal cation. 4-CDP-2-C-methyl-D-erythritol 2-phosphate-binding positions include 10-12 (DVH) and 36-37 (HS). H44 lines the a divalent metal cation pocket. 4-CDP-2-C-methyl-D-erythritol 2-phosphate contacts are provided by residues 58–60 (DIG), 63–67 (FPDND), 134–137 (TTTE), F141, and R144.

It belongs to the IspF family. Homotrimer. Requires a divalent metal cation as cofactor.

The catalysed reaction is 4-CDP-2-C-methyl-D-erythritol 2-phosphate = 2-C-methyl-D-erythritol 2,4-cyclic diphosphate + CMP. The protein operates within isoprenoid biosynthesis; isopentenyl diphosphate biosynthesis via DXP pathway; isopentenyl diphosphate from 1-deoxy-D-xylulose 5-phosphate: step 4/6. Functionally, involved in the biosynthesis of isopentenyl diphosphate (IPP) and dimethylallyl diphosphate (DMAPP), two major building blocks of isoprenoid compounds. Catalyzes the conversion of 4-diphosphocytidyl-2-C-methyl-D-erythritol 2-phosphate (CDP-ME2P) to 2-C-methyl-D-erythritol 2,4-cyclodiphosphate (ME-CPP) with a corresponding release of cytidine 5-monophosphate (CMP). The chain is 2-C-methyl-D-erythritol 2,4-cyclodiphosphate synthase from Carboxydothermus hydrogenoformans (strain ATCC BAA-161 / DSM 6008 / Z-2901).